A 155-amino-acid chain; its full sequence is Large ribosomal subunit protein uL15 (155 aa).

Residues 1-16 (MVRRFKRAVKYRRGSR) show a composition bias toward basic residues. The interval 1 to 35 (MVRRFKRAVKYRRGSRTHGWGRVGQHRKSGGSGGK) is disordered.

The protein belongs to the universal ribosomal protein uL15 family. In terms of assembly, part of the 50S ribosomal subunit.

Its function is as follows. Binds to the 23S rRNA. This is Large ribosomal subunit protein uL15 from Pyrobaculum arsenaticum (strain DSM 13514 / JCM 11321 / PZ6).